Consider the following 306-residue polypeptide: Methionyl-tRNA formyltransferase (306 aa).

110-113 (SLLP) is a binding site for (6S)-5,6,7,8-tetrahydrofolate.

It belongs to the Fmt family.

It catalyses the reaction L-methionyl-tRNA(fMet) + (6R)-10-formyltetrahydrofolate = N-formyl-L-methionyl-tRNA(fMet) + (6S)-5,6,7,8-tetrahydrofolate + H(+). Functionally, attaches a formyl group to the free amino group of methionyl-tRNA(fMet). The formyl group appears to play a dual role in the initiator identity of N-formylmethionyl-tRNA by promoting its recognition by IF2 and preventing the misappropriation of this tRNA by the elongation apparatus. This Brucella suis (strain ATCC 23445 / NCTC 10510) protein is Methionyl-tRNA formyltransferase.